The chain runs to 258 residues: Global transcriptional regulator CodY (258 aa).

Residues Met1–Leu156 are GAF domain. The H-T-H motif DNA-binding region spans Ala204 to Arg223.

This sequence belongs to the CodY family.

The protein localises to the cytoplasm. DNA-binding global transcriptional regulator which is involved in the adaptive response to starvation and acts by directly or indirectly controlling the expression of numerous genes in response to nutrient availability. During rapid exponential growth, CodY is highly active and represses genes whose products allow adaptation to nutrient depletion. The protein is Global transcriptional regulator CodY of Clostridium acetobutylicum (strain ATCC 824 / DSM 792 / JCM 1419 / IAM 19013 / LMG 5710 / NBRC 13948 / NRRL B-527 / VKM B-1787 / 2291 / W).